We begin with the raw amino-acid sequence, 356 residues long: Glucose 1-dehydrogenase 2 (356 aa).

Residue aspartate 38 participates in Zn(2+) binding. Position 40 (serine 40) interacts with substrate. Residues histidine 64 and glutamate 65 each coordinate Zn(2+). The substrate site is built by glutamate 114 and glutamate 150. Glutamate 150 lines the Zn(2+) pocket. NADP(+) contacts are provided by residues 181–184, 206–207, and 301–303; these read NGNL, RR, and VVN. Asparagine 303 contacts substrate.

The protein belongs to the zinc-containing alcohol dehydrogenase family. Glucose 1-dehydrogenase subfamily. Requires Zn(2+) as cofactor.

It catalyses the reaction D-glucose + NAD(+) = D-glucono-1,5-lactone + NADH + H(+). The catalysed reaction is D-glucose + NADP(+) = D-glucono-1,5-lactone + NADPH + H(+). Functionally, catalyzes the NAD(P)(+)-dependent oxidation of D-glucose to D-gluconate via gluconolactone. Can utilize both NAD(+) and NADP(+) as electron acceptor. Is involved in the degradation of glucose through a modified Entner-Doudoroff pathway. This is Glucose 1-dehydrogenase 2 from Haloterrigena turkmenica (strain ATCC 51198 / DSM 5511 / JCM 9101 / NCIMB 13204 / VKM B-1734 / 4k) (Halococcus turkmenicus).